The primary structure comprises 134 residues: uncharacterized protein (134 aa).

The tract at residues 1–30 (MGTLQGAALRSRERPSWPQETHGHRERTEE) is disordered. Residues 10–30 (RSRERPSWPQETHGHRERTEE) show a composition bias toward basic and acidic residues.

This is an uncharacterized protein from Homo sapiens (Human).